The primary structure comprises 329 residues: 4-hydroxythreonine-4-phosphate dehydrogenase (329 aa).

Substrate-binding residues include His136 and Thr137. Residues His166, His211, and His266 each coordinate a divalent metal cation. Substrate is bound by residues Lys274, Asn283, and Arg292.

Belongs to the PdxA family. In terms of assembly, homodimer. Requires Zn(2+) as cofactor. It depends on Mg(2+) as a cofactor. The cofactor is Co(2+).

The protein resides in the cytoplasm. The catalysed reaction is 4-(phosphooxy)-L-threonine + NAD(+) = 3-amino-2-oxopropyl phosphate + CO2 + NADH. The protein operates within cofactor biosynthesis; pyridoxine 5'-phosphate biosynthesis; pyridoxine 5'-phosphate from D-erythrose 4-phosphate: step 4/5. Catalyzes the NAD(P)-dependent oxidation of 4-(phosphooxy)-L-threonine (HTP) into 2-amino-3-oxo-4-(phosphooxy)butyric acid which spontaneously decarboxylates to form 3-amino-2-oxopropyl phosphate (AHAP). The polypeptide is 4-hydroxythreonine-4-phosphate dehydrogenase (Escherichia coli O81 (strain ED1a)).